We begin with the raw amino-acid sequence, 450 residues long: Chromosomal replication initiator protein DnaA (450 aa).

The tract at residues 1 to 84 is domain I, interacts with DnaA modulators; it reads MTENEQIFWN…AVDYVYEDNL (84 aa). Positions 84–109 are domain II; sequence LMIEQQHQGQQGYTEQAFQQLPAVQS. The tract at residues 110-328 is domain III, AAA+ region; the sequence is DLNPKYSFDN…GALKDISLVA (219 aa). ATP contacts are provided by glycine 154, glycine 156, lysine 157, and threonine 158. The domain IV, binds dsDNA stretch occupies residues 329-450; it reads NFKQIDTITV…EIETIKNKIK (122 aa).

Belongs to the DnaA family. In terms of assembly, oligomerizes as a right-handed, spiral filament on DNA at oriC.

The protein resides in the cytoplasm. Its function is as follows. Plays an essential role in the initiation and regulation of chromosomal replication. ATP-DnaA binds to the origin of replication (oriC) to initiate formation of the DNA replication initiation complex once per cell cycle. Binds the DnaA box (a 9 base pair repeat at the origin) and separates the double-stranded (ds)DNA. Forms a right-handed helical filament on oriC DNA; dsDNA binds to the exterior of the filament while single-stranded (ss)DNA is stabiized in the filament's interior. The ATP-DnaA-oriC complex binds and stabilizes one strand of the AT-rich DNA unwinding element (DUE), permitting loading of DNA polymerase. After initiation quickly degrades to an ADP-DnaA complex that is not apt for DNA replication. Binds acidic phospholipids. The sequence is that of Chromosomal replication initiator protein DnaA from Streptococcus equi subsp. zooepidemicus (strain H70).